Reading from the N-terminus, the 371-residue chain is tRNA-specific 2-thiouridylase MnmA (371 aa).

ATP contacts are provided by residues 13 to 20 (GMSGGVDS) and methionine 39. The interval 99 to 101 (NPD) is interaction with target base in tRNA. The active-site Nucleophile is the cysteine 104. Cysteine 104 and cysteine 200 are oxidised to a cystine. Glycine 128 provides a ligand contact to ATP. The tract at residues 150-152 (KDQ) is interaction with tRNA. Cysteine 200 functions as the Cysteine persulfide intermediate in the catalytic mechanism. Positions 308-309 (RY) are interaction with tRNA.

Belongs to the MnmA/TRMU family.

Its subcellular location is the cytoplasm. The catalysed reaction is S-sulfanyl-L-cysteinyl-[protein] + uridine(34) in tRNA + AH2 + ATP = 2-thiouridine(34) in tRNA + L-cysteinyl-[protein] + A + AMP + diphosphate + H(+). Its function is as follows. Catalyzes the 2-thiolation of uridine at the wobble position (U34) of tRNA, leading to the formation of s(2)U34. The sequence is that of tRNA-specific 2-thiouridylase MnmA from Bacillus anthracis.